The following is a 1007-amino-acid chain: Sal-like protein 2 (1007 aa).

Residues 1-33 form a disordered region; sequence MSRRKQRKPQQLISDCEGPSASENGDASEEDHP. The C2H2-type 1; atypical zinc-finger motif lies at 34 to 56; it reads QVCAKCCAQFTDPTEFLAHQNAC. Disordered stretches follow at residues 59–121, 137–177, 220–243, and 286–306; these read DPPV…GEES, GGGL…SGHL, PASP…PLFS, and PFSA…SPAL. The span at 70–80 shows a compositional bias: low complexity; that stretch reads ENPNNSSASSE. Residues 99–108 show a composition bias toward polar residues; the sequence is PPDSGSSVPT. Positions 151-171 are enriched in pro residues; that stretch reads PLPPESTPAPPPPPPPPPPPG. Phosphoserine is present on Ser-243. C2H2-type zinc fingers lie at residues 373-395 and 401-423; these read HKCR…LRSH and YKCN…FHRH. 2 disordered regions span residues 520-540 and 610-629; these read KNKA…SGVA and AASG…ASSG. 3 consecutive C2H2-type zinc fingers follow at residues 631–653, 659–681, and 691–713; these read NQCV…YGQH, FKCK…FVGH, and NSCP…VRMH. Residues 714-886 form a disordered region; that stretch reads LGGQIPNGGT…SALTPEGEAT (173 aa). Residues 734 to 744 are compositionally biased toward polar residues; it reads ENGSEQSTVSG. A compositionally biased stretch (low complexity) spans 747 to 757; sequence SFPQQQSQQPS. A compositionally biased stretch (acidic residues) spans 758–782; it reads PEEELSEEEEEEDEEEEEDVTDEDS. Ser-797, Ser-802, and Ser-806 each carry phosphoserine. The span at 803–812 shows a compositional bias: acidic residues; that stretch reads EEASGAEEEV. A compositionally biased stretch (basic and acidic residues) spans 862 to 871; the sequence is GKEEGGKPER. A Glycyl lysine isopeptide (Lys-Gly) (interchain with G-Cter in ubiquitin) cross-link involves residue Lys-911. 2 consecutive C2H2-type zinc fingers follow at residues 911 to 933 and 940 to 963; these read KACE…QKTH and FTCV…LLAH.

Belongs to the sal C2H2-type zinc-finger protein family. In terms of tissue distribution, highest levels in adult brain (in different areas). Lower levels in heart; very low levels in kidney and pancreas. Expressed throughout the retina and lens vesicle as well as the periocular mesenchyme.

It is found in the nucleus. Functionally, probable transcription factor that plays a role in eye development before, during, and after optic fissure closure. The chain is Sal-like protein 2 (SALL2) from Homo sapiens (Human).